A 373-amino-acid polypeptide reads, in one-letter code: Phospho-N-acetylmuramoyl-pentapeptide-transferase (373 aa).

A run of 10 helical transmembrane segments spans residues 34–54 (GALF…ISSL), 78–98 (TPTM…LLWA), 100–120 (LANV…AIGF), 141–161 (LGLE…TALS), 181–201 (FMLN…VSAG), 212–232 (GLAI…AYLA), 252–272 (LAVV…FNAP), 275–295 (AIFM…TVAV), 301–321 (IVMA…IIQV), and 350–370 (QVVV…LSTL).

Belongs to the glycosyltransferase 4 family. MraY subfamily. Mg(2+) serves as cofactor.

The protein resides in the cell inner membrane. The catalysed reaction is UDP-N-acetyl-alpha-D-muramoyl-L-alanyl-gamma-D-glutamyl-meso-2,6-diaminopimeloyl-D-alanyl-D-alanine + di-trans,octa-cis-undecaprenyl phosphate = di-trans,octa-cis-undecaprenyl diphospho-N-acetyl-alpha-D-muramoyl-L-alanyl-D-glutamyl-meso-2,6-diaminopimeloyl-D-alanyl-D-alanine + UMP. It participates in cell wall biogenesis; peptidoglycan biosynthesis. Catalyzes the initial step of the lipid cycle reactions in the biosynthesis of the cell wall peptidoglycan: transfers peptidoglycan precursor phospho-MurNAc-pentapeptide from UDP-MurNAc-pentapeptide onto the lipid carrier undecaprenyl phosphate, yielding undecaprenyl-pyrophosphoryl-MurNAc-pentapeptide, known as lipid I. The sequence is that of Phospho-N-acetylmuramoyl-pentapeptide-transferase from Rhizobium rhizogenes (strain K84 / ATCC BAA-868) (Agrobacterium radiobacter).